Consider the following 935-residue polypeptide: ABC transporter A family member 7 (935 aa).

A run of 7 helical transmembrane segments spans residues 34–54 (LIMIPFYLCILLVIIQILFDT), 338–358 (IASLIGPLFFTWVILLLFPVI), 392–412 (FLTISVLYVICLMIFGSAIGL), 424–444 (FVFYFLYLNLQIALAFLVSSV), 454–474 (ASYIYVFGSGLLGLFLLNFLI), 483–503 (WIIVMELYPGFSLYRGLYELA), and 528–548 (DDVFYIIVVEWFLALIAAYYI). The segment at 571–591 (SLRRPSLQRQGSKVSVDMEKP) is disordered. Positions 613 to 850 (IVCDNLKKVY…YGGSYVFTMT (238 aa)) constitute an ABC transporter domain. ATP is bound at residue 651 to 658 (GPNGAGKT).

It belongs to the ABC transporter superfamily. ABCA family. CPR flippase (TC 3.A.1.211) subfamily.

Its subcellular location is the membrane. The chain is ABC transporter A family member 7 (ABCA7) from Arabidopsis thaliana (Mouse-ear cress).